We begin with the raw amino-acid sequence, 149 residues long: Large ribosomal subunit protein bL9 (149 aa).

It belongs to the bacterial ribosomal protein bL9 family.

In terms of biological role, binds to the 23S rRNA. This chain is Large ribosomal subunit protein bL9 (rplI), found in Geobacillus stearothermophilus (Bacillus stearothermophilus).